We begin with the raw amino-acid sequence, 207 residues long: Large ribosomal subunit protein uL4 (207 aa).

Positions 50–75 are disordered; that stretch reads KTKTVSEVSGTTKKPFKQKGTGNARQ.

The protein belongs to the universal ribosomal protein uL4 family. Part of the 50S ribosomal subunit.

Its function is as follows. One of the primary rRNA binding proteins, this protein initially binds near the 5'-end of the 23S rRNA. It is important during the early stages of 50S assembly. It makes multiple contacts with different domains of the 23S rRNA in the assembled 50S subunit and ribosome. Forms part of the polypeptide exit tunnel. The sequence is that of Large ribosomal subunit protein uL4 from Rickettsia akari (strain Hartford).